Consider the following 367-residue polypeptide: Homoserine O-acetyltransferase (367 aa).

An AB hydrolase-1 domain is found at 44–350 (NVIMVEHAWT…AYGHDAFLLE (307 aa)). The active-site Nucleophile is S150. R217 serves as a coordination point for substrate. Catalysis depends on residues D311 and H344. D345 is a binding site for substrate.

The protein belongs to the AB hydrolase superfamily. MetX family. As to quaternary structure, homodimer.

The protein localises to the cytoplasm. It carries out the reaction L-homoserine + acetyl-CoA = O-acetyl-L-homoserine + CoA. The protein operates within amino-acid biosynthesis; L-methionine biosynthesis via de novo pathway; O-acetyl-L-homoserine from L-homoserine: step 1/1. Transfers an acetyl group from acetyl-CoA to L-homoserine, forming acetyl-L-homoserine. In vitro, can also use propionyl-CoA or butiryl-CoA as acyl donor. This chain is Homoserine O-acetyltransferase, found in Trichlorobacter lovleyi (strain ATCC BAA-1151 / DSM 17278 / SZ) (Geobacter lovleyi).